The following is a 478-amino-acid chain: Trigger factor (478 aa).

Over residues 154–167 (MAKDSRSFEPREEG) the composition is skewed to basic and acidic residues. Disordered regions lie at residues 154-173 (MAKD…AQSG) and 441-478 (KEAL…KAAG). Positions 173–258 (GDRVTIDFVG…VKAVAAPGET (86 aa)) constitute a PPIase FKBP-type domain.

This sequence belongs to the FKBP-type PPIase family. Tig subfamily.

It is found in the cytoplasm. The enzyme catalyses [protein]-peptidylproline (omega=180) = [protein]-peptidylproline (omega=0). In terms of biological role, involved in protein export. Acts as a chaperone by maintaining the newly synthesized protein in an open conformation. Functions as a peptidyl-prolyl cis-trans isomerase. The sequence is that of Trigger factor from Methylorubrum extorquens (strain CM4 / NCIMB 13688) (Methylobacterium extorquens).